A 671-amino-acid chain; its full sequence is DNA ligase (671 aa).

Residues 37–41, 86–87, and E117 each bind NAD(+); these read DIEYD and SL. The active-site N6-AMP-lysine intermediate is K119. R140, E177, K295, and K319 together coordinate NAD(+). Residues C413, C416, C431, and C437 each contribute to the Zn(2+) site. Positions 594–671 constitute a BRCT domain; that stretch reads IISAAVFGKT…DEEEMLNLLK (78 aa).

Belongs to the NAD-dependent DNA ligase family. LigA subfamily. The cofactor is Mg(2+). Mn(2+) serves as cofactor.

It catalyses the reaction NAD(+) + (deoxyribonucleotide)n-3'-hydroxyl + 5'-phospho-(deoxyribonucleotide)m = (deoxyribonucleotide)n+m + AMP + beta-nicotinamide D-nucleotide.. Functionally, DNA ligase that catalyzes the formation of phosphodiester linkages between 5'-phosphoryl and 3'-hydroxyl groups in double-stranded DNA using NAD as a coenzyme and as the energy source for the reaction. It is essential for DNA replication and repair of damaged DNA. In Polynucleobacter asymbioticus (strain DSM 18221 / CIP 109841 / QLW-P1DMWA-1) (Polynucleobacter necessarius subsp. asymbioticus), this protein is DNA ligase.